The primary structure comprises 214 residues: Cytochrome b (214 aa).

4 consecutive transmembrane segments (helical) span residues 31–51 (FGSM…FLAI), 75–96 (WIMQ…YIHI), 111–131 (WLSG…GYVL), and 176–196 (FFAL…IHIL). Heme b contacts are provided by His81 and His95. Positions 180 and 194 each coordinate heme b. His199 contacts a ubiquinone.

The protein belongs to the cytochrome b family. As to quaternary structure, the cytochrome bc1 complex contains 3 respiratory subunits (MT-CYB, CYC1 and UQCRFS1), 2 core proteins (UQCRC1 and UQCRC2) and probably 6 low-molecular weight proteins. It depends on heme b as a cofactor.

The protein localises to the mitochondrion inner membrane. In terms of biological role, component of the ubiquinol-cytochrome c reductase complex (complex III or cytochrome b-c1 complex) that is part of the mitochondrial respiratory chain. The b-c1 complex mediates electron transfer from ubiquinol to cytochrome c. Contributes to the generation of a proton gradient across the mitochondrial membrane that is then used for ATP synthesis. The polypeptide is Cytochrome b (MT-CYB) (Agkistrodon contortrix contortrix (Southern copperhead)).